A 426-amino-acid chain; its full sequence is Enolase (426 aa).

Glutamine 165 provides a ligand contact to (2R)-2-phosphoglycerate. Residue glutamate 209 is the Proton donor of the active site. Positions 244, 287, and 313 each coordinate Mg(2+). The (2R)-2-phosphoglycerate site is built by lysine 338, arginine 367, serine 368, and lysine 389. Lysine 338 (proton acceptor) is an active-site residue.

It belongs to the enolase family. Mg(2+) serves as cofactor.

The protein localises to the cytoplasm. The protein resides in the secreted. Its subcellular location is the cell surface. It catalyses the reaction (2R)-2-phosphoglycerate = phosphoenolpyruvate + H2O. Its pathway is carbohydrate degradation; glycolysis; pyruvate from D-glyceraldehyde 3-phosphate: step 4/5. Functionally, catalyzes the reversible conversion of 2-phosphoglycerate (2-PG) into phosphoenolpyruvate (PEP). It is essential for the degradation of carbohydrates via glycolysis. The polypeptide is Enolase (Methanococcus vannielii (strain ATCC 35089 / DSM 1224 / JCM 13029 / OCM 148 / SB)).